The chain runs to 423 residues: Transmembrane protein 130 (423 aa).

Positions 1-24 (MAQAVWSRLGRILWLSCLLPWAPA) are cleaved as a signal peptide. At 25–339 (GVAAGLYELN…IQVWPSRIQP (315 aa)) the chain is on the extracellular side. Asparagine 34, asparagine 197, and asparagine 300 each carry an N-linked (GlcNAc...) asparagine glycan. The region spanning 147–233 (WPSSYLTKTI…AVMQKTGDFS (87 aa)) is the PKD domain. The helical transmembrane segment at 340-360 (AVFAFPCATLITVMLAFIMYM) threads the bilayer. Residues 361–423 (TLRNATQQKD…LYKSVKTYTV (63 aa)) lie on the Cytoplasmic side of the membrane.

It localises to the golgi apparatus membrane. This is Transmembrane protein 130 (TMEM130) from Pongo abelii (Sumatran orangutan).